We begin with the raw amino-acid sequence, 568 residues long: Proline--tRNA ligase (568 aa).

It belongs to the class-II aminoacyl-tRNA synthetase family. ProS type 1 subfamily. In terms of assembly, homodimer.

The protein localises to the cytoplasm. The enzyme catalyses tRNA(Pro) + L-proline + ATP = L-prolyl-tRNA(Pro) + AMP + diphosphate. In terms of biological role, catalyzes the attachment of proline to tRNA(Pro) in a two-step reaction: proline is first activated by ATP to form Pro-AMP and then transferred to the acceptor end of tRNA(Pro). As ProRS can inadvertently accommodate and process non-cognate amino acids such as alanine and cysteine, to avoid such errors it has two additional distinct editing activities against alanine. One activity is designated as 'pretransfer' editing and involves the tRNA(Pro)-independent hydrolysis of activated Ala-AMP. The other activity is designated 'posttransfer' editing and involves deacylation of mischarged Ala-tRNA(Pro). The misacylated Cys-tRNA(Pro) is not edited by ProRS. In Listeria innocua serovar 6a (strain ATCC BAA-680 / CLIP 11262), this protein is Proline--tRNA ligase.